The chain runs to 192 residues: A-type ATP synthase subunit E (192 aa).

The protein belongs to the V-ATPase E subunit family. As to quaternary structure, has multiple subunits with at least A(3), B(3), C, D, E, F, H, I and proteolipid K(x).

It is found in the cell membrane. Its function is as follows. Component of the A-type ATP synthase that produces ATP from ADP in the presence of a proton gradient across the membrane. The polypeptide is A-type ATP synthase subunit E (Halorubrum lacusprofundi (strain ATCC 49239 / DSM 5036 / JCM 8891 / ACAM 34)).